Consider the following 828-residue polypeptide: DNA gyrase subunit A (828 aa).

Residues 32 to 497 form the Topo IIA-type catalytic domain; the sequence is LPDVRDGLKP…EVLSLEDEDL (466 aa). Tyr120 (O-(5'-phospho-DNA)-tyrosine intermediate) is an active-site residue. A GyrA-box motif is present at residues 524 to 530; that stretch reads QKRGGRG.

It belongs to the type II topoisomerase GyrA/ParC subunit family. In terms of assembly, heterotetramer, composed of two GyrA and two GyrB chains. In the heterotetramer, GyrA contains the active site tyrosine that forms a transient covalent intermediate with DNA, while GyrB binds cofactors and catalyzes ATP hydrolysis.

Its subcellular location is the cytoplasm. The catalysed reaction is ATP-dependent breakage, passage and rejoining of double-stranded DNA.. Its function is as follows. A type II topoisomerase that negatively supercoils closed circular double-stranded (ds) DNA in an ATP-dependent manner to modulate DNA topology and maintain chromosomes in an underwound state. Negative supercoiling favors strand separation, and DNA replication, transcription, recombination and repair, all of which involve strand separation. Also able to catalyze the interconversion of other topological isomers of dsDNA rings, including catenanes and knotted rings. Type II topoisomerases break and join 2 DNA strands simultaneously in an ATP-dependent manner. This Streptococcus pyogenes serotype M18 (strain MGAS8232) protein is DNA gyrase subunit A.